The sequence spans 278 residues: Urease accessory protein UreD (278 aa).

The protein belongs to the UreD family. In terms of assembly, ureD, UreF and UreG form a complex that acts as a GTP-hydrolysis-dependent molecular chaperone, activating the urease apoprotein by helping to assemble the nickel containing metallocenter of UreC. The UreE protein probably delivers the nickel.

It localises to the cytoplasm. Its function is as follows. Required for maturation of urease via the functional incorporation of the urease nickel metallocenter. The chain is Urease accessory protein UreD from Blochmanniella pennsylvanica (strain BPEN).